We begin with the raw amino-acid sequence, 504 residues long: D-alanine--D-alanyl carrier protein ligase (504 aa).

Position 152–153 (Thr-152–Ser-153) interacts with ATP. Residue Asp-197 participates in D-alanine binding. Asn-292 to Thr-297 contacts ATP. Val-301 contacts D-alanine. ATP-binding positions include Asp-383, Tyr-394 to Arg-397, and Lys-492. Lys-492 lines the D-alanine pocket.

It belongs to the ATP-dependent AMP-binding enzyme family. DltA subfamily.

The protein resides in the cytoplasm. The enzyme catalyses holo-[D-alanyl-carrier protein] + D-alanine + ATP = D-alanyl-[D-alanyl-carrier protein] + AMP + diphosphate. The protein operates within cell wall biogenesis; lipoteichoic acid biosynthesis. In terms of biological role, catalyzes the first step in the D-alanylation of lipoteichoic acid (LTA), the activation of D-alanine and its transfer onto the D-alanyl carrier protein (Dcp) DltC. In an ATP-dependent two-step reaction, forms a high energy D-alanyl-AMP intermediate, followed by transfer of the D-alanyl residue as a thiol ester to the phosphopantheinyl prosthetic group of the Dcp. D-alanylation of LTA plays an important role in modulating the properties of the cell wall in Gram-positive bacteria, influencing the net charge of the cell wall. The sequence is that of D-alanine--D-alanyl carrier protein ligase from Bacillus cereus (strain G9842).